The primary structure comprises 592 residues: E3 ubiquitin-protein ligase RNF180 (592 aa).

Topologically, residues 1–564 (MKRSEESTST…DSRGWWFDMD (564 aa)) are cytoplasmic. Ser231 carries the phosphoserine modification. Positions 282–489 (QSPPSFDPNM…VFLQTELNNA (208 aa)) are interaction with ZIC2. An RING-type zinc finger spans residues 432 to 474 (CAVCLDVYFNPYMCYPCHHIFCEPCLRTLAKDNPASTPCPLCR). The helical transmembrane segment at 565–585 (MVIIYIYSVNWVIGFVVFCFL) threads the bilayer. Residues 586–592 (CYFFFPF) lie on the Extracellular side of the membrane.

As to quaternary structure, interacts with ZIC2. As to expression, brain, kidney, testis and uterus. membrane protein. Nucleus envelope.

The protein localises to the endoplasmic reticulum membrane. Its subcellular location is the nucleus envelope. The catalysed reaction is S-ubiquitinyl-[E2 ubiquitin-conjugating enzyme]-L-cysteine + [acceptor protein]-L-lysine = [E2 ubiquitin-conjugating enzyme]-L-cysteine + N(6)-ubiquitinyl-[acceptor protein]-L-lysine.. The protein operates within protein modification; protein ubiquitination. Its function is as follows. E3 ubiquitin-protein ligase which promotes polyubiquitination and degradation by the proteasome pathway of ZIC2. The protein is E3 ubiquitin-protein ligase RNF180 (Rnf180) of Mus musculus (Mouse).